The sequence spans 118 residues: Large ribosomal subunit protein bL20 (118 aa).

This sequence belongs to the bacterial ribosomal protein bL20 family.

Functionally, binds directly to 23S ribosomal RNA and is necessary for the in vitro assembly process of the 50S ribosomal subunit. It is not involved in the protein synthesizing functions of that subunit. This chain is Large ribosomal subunit protein bL20, found in Fervidobacterium nodosum (strain ATCC 35602 / DSM 5306 / Rt17-B1).